A 114-amino-acid polypeptide reads, in one-letter code: uncharacterized protein (114 aa).

3 helical membrane passes run 38–60, 64–86, and 91–113; these read PLWF…TAGI, YAAI…AHMF, and SVIM…MGSY.

It localises to the cell membrane. This is an uncharacterized protein from Bacillus subtilis (strain 168).